Consider the following 296-residue polypeptide: Acetyl-coenzyme A carboxylase carboxyl transferase subunit beta (296 aa).

A CoA carboxyltransferase N-terminal domain is found at 25-294; it reads VWTKCTSCEQ…PFVEPELISE (270 aa). 4 residues coordinate Zn(2+): Cys-29, Cys-32, Cys-48, and Cys-51. Residues 29 to 51 form a C4-type zinc finger; the sequence is CTSCEQVLYSEELKRNLYVCPKC.

Belongs to the AccD/PCCB family. Acetyl-CoA carboxylase is a heterohexamer composed of biotin carboxyl carrier protein (AccB), biotin carboxylase (AccC) and two subunits each of ACCase subunit alpha (AccA) and ACCase subunit beta (AccD). Zn(2+) is required as a cofactor.

Its subcellular location is the cytoplasm. It carries out the reaction N(6)-carboxybiotinyl-L-lysyl-[protein] + acetyl-CoA = N(6)-biotinyl-L-lysyl-[protein] + malonyl-CoA. Its pathway is lipid metabolism; malonyl-CoA biosynthesis; malonyl-CoA from acetyl-CoA: step 1/1. In terms of biological role, component of the acetyl coenzyme A carboxylase (ACC) complex. Biotin carboxylase (BC) catalyzes the carboxylation of biotin on its carrier protein (BCCP) and then the CO(2) group is transferred by the transcarboxylase to acetyl-CoA to form malonyl-CoA. The polypeptide is Acetyl-coenzyme A carboxylase carboxyl transferase subunit beta (Haemophilus influenzae (strain PittEE)).